The primary structure comprises 141 residues: Hemoglobin subunit alpha-D (141 aa).

One can recognise a Globin domain in the interval 1–141 (VLTHEDCELL…VGDMLAEKYR (141 aa)). The heme b site is built by histidine 58 and histidine 87.

The protein belongs to the globin family. As to quaternary structure, there are three forms of hemoglobin in Sphenodon: A, A' and D. Hb A is a tetramer of two alpha-A and two beta-1, Hb A' is a tetramer of two alpha-a and two beta-2, Hb D is a tetramer of two alpha-D and two beta-2. Red blood cells.

Its function is as follows. Involved in oxygen transport from the lung to the various peripheral tissues. The sequence is that of Hemoglobin subunit alpha-D (HBAD) from Sphenodon punctatus (Tuatara).